The primary structure comprises 246 residues: 3-deoxy-manno-octulosonate cytidylyltransferase (246 aa).

It belongs to the KdsB family.

Its subcellular location is the cytoplasm. The enzyme catalyses 3-deoxy-alpha-D-manno-oct-2-ulosonate + CTP = CMP-3-deoxy-beta-D-manno-octulosonate + diphosphate. The protein operates within nucleotide-sugar biosynthesis; CMP-3-deoxy-D-manno-octulosonate biosynthesis; CMP-3-deoxy-D-manno-octulosonate from 3-deoxy-D-manno-octulosonate and CTP: step 1/1. It functions in the pathway bacterial outer membrane biogenesis; lipopolysaccharide biosynthesis. Activates KDO (a required 8-carbon sugar) for incorporation into bacterial lipopolysaccharide in Gram-negative bacteria. This Rickettsia massiliae (strain Mtu5) protein is 3-deoxy-manno-octulosonate cytidylyltransferase.